A 338-amino-acid polypeptide reads, in one-letter code: Lipoate-protein ligase A (338 aa).

The BPL/LPL catalytic domain maps to 29–216 (PATQRVLFLW…AFFAHYGERV (188 aa)). Residues R71, 76–79 (GAVF), and K134 each bind ATP. K134 contributes to the (R)-lipoate binding site.

The protein belongs to the LplA family. Monomer.

Its subcellular location is the cytoplasm. It catalyses the reaction L-lysyl-[lipoyl-carrier protein] + (R)-lipoate + ATP = N(6)-[(R)-lipoyl]-L-lysyl-[lipoyl-carrier protein] + AMP + diphosphate + H(+). It participates in protein modification; protein lipoylation via exogenous pathway; protein N(6)-(lipoyl)lysine from lipoate: step 1/2. It functions in the pathway protein modification; protein lipoylation via exogenous pathway; protein N(6)-(lipoyl)lysine from lipoate: step 2/2. In terms of biological role, catalyzes both the ATP-dependent activation of exogenously supplied lipoate to lipoyl-AMP and the transfer of the activated lipoyl onto the lipoyl domains of lipoate-dependent enzymes. The chain is Lipoate-protein ligase A from Escherichia coli O6:K15:H31 (strain 536 / UPEC).